Reading from the N-terminus, the 120-residue chain is Large ribosomal subunit protein bL17 (120 aa).

Belongs to the bacterial ribosomal protein bL17 family. As to quaternary structure, part of the 50S ribosomal subunit. Contacts protein L32.

The polypeptide is Large ribosomal subunit protein bL17 (Desulforapulum autotrophicum (strain ATCC 43914 / DSM 3382 / VKM B-1955 / HRM2) (Desulfobacterium autotrophicum)).